A 271-amino-acid chain; its full sequence is Aminoglycoside N(3)-acetyltransferase III (271 aa).

CoA-binding residues include His31, Ala32, Ser33, Val34, and Lys35. Residues Tyr64, Asp72, and Glu102 each contribute to the a 2-deoxystreptamine antibiotic site. Residues Ser104, Val105, and Phe109 each coordinate CoA. Residues Glu123, Tyr146, and Asp170 each coordinate a 2-deoxystreptamine antibiotic. Residues Thr171 and Thr173 each contribute to the CoA site. 4 residues coordinate a 2-deoxystreptamine antibiotic: His176, Thr212, Gly213, and Phe221.

Belongs to the antibiotic N-acetyltransferase family. As to quaternary structure, homodimer.

The enzyme catalyses a 2-deoxystreptamine antibiotic + acetyl-CoA = an N(3)-acetyl-2-deoxystreptamine antibiotic + CoA + H(+). In terms of biological role, resistance to antibiotics containing the 2-deoxy-streptamine ring including dibekacin, gentamicin, kanamycin, sisomicin, tobramycin and neomycin, but not to amikacin or netilmicin. Acetylates a broad range of both 4,5- and 4,6-disubstituted aminoglycosides, including neomycin, paromomycin, ribostamycin, sisomicin, gentamicin, tobramycin and kanamycin, with no preference of one disubstitution over the other. Acetylates sisomicin and kanamycin most and least efficiently, respectively. Does not modify plazomicin. This is Aminoglycoside N(3)-acetyltransferase III from Pseudomonas aeruginosa.